Here is a 119-residue protein sequence, read N- to C-terminus: Large ribosomal subunit protein uL24 (119 aa).

The protein belongs to the universal ribosomal protein uL24 family. In terms of assembly, part of the 50S ribosomal subunit.

One of two assembly initiator proteins, it binds directly to the 5'-end of the 23S rRNA, where it nucleates assembly of the 50S subunit. In terms of biological role, located at the polypeptide exit tunnel on the outside of the subunit. This is Large ribosomal subunit protein uL24 from Methanococcus vannielii.